The primary structure comprises 480 residues: Major facilitator superfamily domain-containing protein 12 (480 aa).

M1 bears the N-acetylmethionine mark. The Cytoplasmic segment spans residues 1–26 (MGPGPPAAGAAPSPRPLSLVARLSYA). A helical membrane pass occupies residues 27-47 (VGHFLNDLCASMWFTYLLLYL). The Lumenal segment spans residues 48–56 (HSVRAYSSR). Residues 57-77 (GAGLLLLLGQVADGLCTPLVG) form a helical membrane-spanning segment. Residues 78–97 (YEADRAASCCARYGPRKAWH) lie on the Cytoplasmic side of the membrane. Residues 98–118 (LVGTVCVLLSFPFIFSPCLGC) traverse the membrane as a helical segment. The Lumenal portion of the chain corresponds to 119 to 124 (GAATPE). A helical membrane pass occupies residues 125–145 (WAALLYYGPFIVIFQFGWAST). Residues 146 to 170 (QISHLSLIPELVTNDHEKVELTALR) lie on the Cytoplasmic side of the membrane. A helical membrane pass occupies residues 171 to 191 (YAFTVVANITVYGAAWLLLHL). Residues 192–218 (QGSSRVEPTQDISISDQLGGQDVPVFR) lie on the Lumenal side of the membrane. A helical transmembrane segment spans residues 219–239 (NLSLLVVGVGAVFSLLFHLGT). Residues 240-279 (RERRRPHAEEPGEHTPLLAPATAQPLLLWKHWLREPAFYQ) are Cytoplasmic-facing. Phosphothreonine; by MTOR is present on T254. Residues 280 to 302 (VGILYMTTRLIVNLSQTYMAMYL) traverse the membrane as a helical segment. The Lumenal portion of the chain corresponds to 303–310 (TYSLHLPK). The chain crosses the membrane as a helical span at residues 311–331 (KFIATIPLVMYLSGFLSSFLM). Topologically, residues 332 to 347 (KPINKCIGRNMTYFSG) are cytoplasmic. A run of 2 helical transmembrane segments spans residues 348-368 (LLVI…GVAV) and 369-389 (YAAA…SLAM). The Cytoplasmic segment spans residues 390-402 (TADLIGPHTNSGA). Residues 403-423 (FVYGSMSFLDKVANGLAVMAI) traverse the membrane as a helical segment. At 424 to 446 (QSLHPCPSELCCRACVSFYHWAM) the chain is on the lumenal side. Residues 447–467 (VAVTGGVGVAAALCLCSLLLW) traverse the membrane as a helical segment. The Cytoplasmic segment spans residues 468-480 (PTRLRRWDRDARP).

Belongs to the major facilitator superfamily. In terms of processing, phosphorylation at Thr-254 by MTOR via mTORC1 pathway promotes cysteine transport in lysosomes, thereby regulating lysosomal cysteine and cystine storage and redox homeostasis. In terms of tissue distribution, widely expressed, with high expression in primary melanocytes.

It is found in the melanosome membrane. The protein resides in the lysosome membrane. The enzyme catalyses L-cysteine(in) = L-cysteine(out). Functionally, transporter that mediates the import of cysteine into melanosomes, thereby regulating skin pigmentation. In melanosomes, cysteine import is required both for normal levels of cystine, the oxidized dimer of cysteine, and provide cysteine for the production of the cysteinyldopas used in pheomelanin synthesis, thereby regulating skin pigmentation. Also catalyzes import of cysteine into lysosomes in non-pigmented cells, regulating lysosomal cystine and cysteine storage, which is essnetial for redox homeostasis. This is Major facilitator superfamily domain-containing protein 12 from Homo sapiens (Human).